The primary structure comprises 526 residues: Sugar transport protein 13 (526 aa).

Over 1-18 (MTGGGFATSANGVEFEAK) the chain is Cytoplasmic. The helical transmembrane segment at 19 to 39 (ITPIVIISCIMAATGGLMFGY) threads the bilayer. Over 40–81 (DVGVSGGVTSMPDFLEKFFPVVYRKVVAGADKDSNYCKYDNQ) the chain is Extracellular. Residues 82 to 102 (GLQLFTSSLYLAGLTATFFAS) traverse the membrane as a helical segment. Topologically, residues 103-111 (YTTRTLGRR) are cytoplasmic. A helical membrane pass occupies residues 112–132 (LTMLIAGVFFIIGVALNAGAQ). The Extracellular portion of the chain corresponds to 133-141 (DLAMLIAGR). Residues 142–162 (ILLGCGVGFANQAVPLFLSEI) traverse the membrane as a helical segment. Topologically, residues 163–168 (APTRIR) are cytoplasmic. Residues 169–189 (GGLNILFQLNVTIGILFANLV) form a helical membrane-spanning segment. The Extracellular portion of the chain corresponds to 190 to 203 (NYGTAKIKGGWGWR). A helical transmembrane segment spans residues 204 to 224 (LSLGLAGIPALLLTVGALLVT). Topologically, residues 225-296 (ETPNSLVERG…IAVALQIFQQ (72 aa)) are cytoplasmic. A helical transmembrane segment spans residues 297 to 317 (CTGINAIMFYAPVLFSTLGFG). Topologically, residues 318–319 (SD) are extracellular. Residues 320-340 (ASLYSAVVTGAVNVLSTLVSI) traverse the membrane as a helical segment. The Cytoplasmic segment spans residues 341-349 (YSVDKVGRR). Residues 350–370 (VLLLEAGVQMFFSQVVIAIIL) traverse the membrane as a helical segment. At 371–383 (GVKVTDTSTNLSK) the chain is on the extracellular side. Residues 384 to 404 (GFAILVVVMICTYVAAFAWSW) form a helical membrane-spanning segment. Over 405-426 (GPLGWLIPSETFPLETRSAGQS) the chain is Cytoplasmic. The chain crosses the membrane as a helical span at residues 427–447 (VTVCVNLLFTFIIAQAFLSML). Residues 448 to 451 (CHFK) lie on the Extracellular side of the membrane. A helical transmembrane segment spans residues 452–472 (FGIFIFFSAWVLIMSVFVMFL). Over 473 to 526 (LPETKNIPIEEMTERVWKKHWFWARFMDDHNDHEFVNGEKSNGKSNGFDPSTRL) the chain is Cytoplasmic.

It belongs to the major facilitator superfamily. Sugar transporter (TC 2.A.1.1) family.

It localises to the cell membrane. Mediates an active uptake of hexoses, probably by sugar/hydrogen symport. The polypeptide is Sugar transport protein 13 (STP13) (Arabidopsis thaliana (Mouse-ear cress)).